A 208-amino-acid polypeptide reads, in one-letter code: Protein GrpE (208 aa).

The segment covering 1 to 12 (MTNKDESVEKNT) has biased composition (basic and acidic residues). The interval 1-49 (MTNKDESVEKNTESTVEVTNVKQNIDDSVEQTEESKGHLQDEAIEETSD) is disordered. Residues 13–23 (ESTVEVTNVKQ) are compositionally biased toward polar residues.

Belongs to the GrpE family. Homodimer.

The protein resides in the cytoplasm. Functionally, participates actively in the response to hyperosmotic and heat shock by preventing the aggregation of stress-denatured proteins, in association with DnaK and GrpE. It is the nucleotide exchange factor for DnaK and may function as a thermosensor. Unfolded proteins bind initially to DnaJ; upon interaction with the DnaJ-bound protein, DnaK hydrolyzes its bound ATP, resulting in the formation of a stable complex. GrpE releases ADP from DnaK; ATP binding to DnaK triggers the release of the substrate protein, thus completing the reaction cycle. Several rounds of ATP-dependent interactions between DnaJ, DnaK and GrpE are required for fully efficient folding. In Staphylococcus aureus (strain bovine RF122 / ET3-1), this protein is Protein GrpE.